The chain runs to 195 residues: Imidazoleglycerol-phosphate dehydratase (195 aa).

It belongs to the imidazoleglycerol-phosphate dehydratase family.

Its subcellular location is the cytoplasm. The catalysed reaction is D-erythro-1-(imidazol-4-yl)glycerol 3-phosphate = 3-(imidazol-4-yl)-2-oxopropyl phosphate + H2O. Its pathway is amino-acid biosynthesis; L-histidine biosynthesis; L-histidine from 5-phospho-alpha-D-ribose 1-diphosphate: step 6/9. The polypeptide is Imidazoleglycerol-phosphate dehydratase (Aromatoleum aromaticum (strain DSM 19018 / LMG 30748 / EbN1) (Azoarcus sp. (strain EbN1))).